A 160-amino-acid chain; its full sequence is Protein Bel-3 (160 aa).

As to quaternary structure, homodimer.

The protein localises to the host cytoplasm. In Human spumaretrovirus (SFVcpz(hu)), this protein is Protein Bel-3 (bel3).